A 451-amino-acid chain; its full sequence is tRNA-2-methylthio-N(6)-dimethylallyladenosine synthase (451 aa).

The 117-residue stretch at 6 to 122 (RHYHITTFGC…LQDLLEQVFN (117 aa)) folds into the MTTase N-terminal domain. [4Fe-4S] cluster contacts are provided by C15, C51, C85, C157, C161, and C164. Residues 143-380 (RDSKITAWVN…NHLVGVKAAD (238 aa)) form the Radical SAM core domain. Positions 383–447 (QRYMGRIEEV…PFSLTGEVKE (65 aa)) constitute a TRAM domain.

The protein belongs to the methylthiotransferase family. MiaB subfamily. As to quaternary structure, monomer. [4Fe-4S] cluster is required as a cofactor.

It localises to the cytoplasm. It carries out the reaction N(6)-dimethylallyladenosine(37) in tRNA + (sulfur carrier)-SH + AH2 + 2 S-adenosyl-L-methionine = 2-methylsulfanyl-N(6)-dimethylallyladenosine(37) in tRNA + (sulfur carrier)-H + 5'-deoxyadenosine + L-methionine + A + S-adenosyl-L-homocysteine + 2 H(+). Catalyzes the methylthiolation of N6-(dimethylallyl)adenosine (i(6)A), leading to the formation of 2-methylthio-N6-(dimethylallyl)adenosine (ms(2)i(6)A) at position 37 in tRNAs that read codons beginning with uridine. In Trichodesmium erythraeum (strain IMS101), this protein is tRNA-2-methylthio-N(6)-dimethylallyladenosine synthase.